We begin with the raw amino-acid sequence, 278 residues long: 3-methyl-2-oxobutanoate hydroxymethyltransferase (278 aa).

Mg(2+) contacts are provided by D43 and D82. 3-methyl-2-oxobutanoate is bound by residues 43-44 (DS), D82, and K112. A Mg(2+)-binding site is contributed by E114. The Proton acceptor role is filled by E181.

The protein belongs to the PanB family. As to quaternary structure, homodecamer; pentamer of dimers. It depends on Mg(2+) as a cofactor.

The protein resides in the cytoplasm. It catalyses the reaction 3-methyl-2-oxobutanoate + (6R)-5,10-methylene-5,6,7,8-tetrahydrofolate + H2O = 2-dehydropantoate + (6S)-5,6,7,8-tetrahydrofolate. Its pathway is cofactor biosynthesis; (R)-pantothenate biosynthesis; (R)-pantoate from 3-methyl-2-oxobutanoate: step 1/2. Functionally, catalyzes the reversible reaction in which hydroxymethyl group from 5,10-methylenetetrahydrofolate is transferred onto alpha-ketoisovalerate to form ketopantoate. The chain is 3-methyl-2-oxobutanoate hydroxymethyltransferase from Bacillus cereus (strain ATCC 10987 / NRS 248).